The sequence spans 299 residues: Ribosomal protein L11 methyltransferase (299 aa).

Threonine 144, glycine 165, aspartate 187, and asparagine 229 together coordinate S-adenosyl-L-methionine.

Belongs to the methyltransferase superfamily. PrmA family.

It localises to the cytoplasm. The catalysed reaction is L-lysyl-[protein] + 3 S-adenosyl-L-methionine = N(6),N(6),N(6)-trimethyl-L-lysyl-[protein] + 3 S-adenosyl-L-homocysteine + 3 H(+). Its function is as follows. Methylates ribosomal protein L11. The protein is Ribosomal protein L11 methyltransferase of Teredinibacter turnerae (strain ATCC 39867 / T7901).